Consider the following 408-residue polypeptide: Arylacetamide deacetylase-like 3 (408 aa).

The next 3 helical transmembrane spans lie at 2–22 (VVLALTLLVGSVAVFSLGSLL), 46–66 (ILSCLFHLTMTWGMIFEKLGL), and 109–129 (SSIPRLGIIFFHGGGTIIGSL). The short motif at 120-122 (HGG) is the Involved in the stabilization of the negatively charged intermediate by the formation of the oxyanion hole element. Serine 194 is an active-site residue. Residue asparagine 321 is glycosylated (N-linked (GlcNAc...) asparagine). Catalysis depends on residues aspartate 348 and histidine 378.

Belongs to the 'GDXG' lipolytic enzyme family.

It is found in the membrane. The protein is Arylacetamide deacetylase-like 3 (Aadacl3) of Mus musculus (Mouse).